A 224-amino-acid chain; its full sequence is 7-cyano-7-deazaguanine synthase (224 aa).

9–19 (LSGGLDSATVL) contributes to the ATP binding site. Cysteine 189, cysteine 199, cysteine 202, and cysteine 205 together coordinate Zn(2+).

The protein belongs to the QueC family. Requires Zn(2+) as cofactor.

It carries out the reaction 7-carboxy-7-deazaguanine + NH4(+) + ATP = 7-cyano-7-deazaguanine + ADP + phosphate + H2O + H(+). It participates in purine metabolism; 7-cyano-7-deazaguanine biosynthesis. Its function is as follows. Catalyzes the ATP-dependent conversion of 7-carboxy-7-deazaguanine (CDG) to 7-cyano-7-deazaguanine (preQ(0)). This chain is 7-cyano-7-deazaguanine synthase, found in Ralstonia pickettii (strain 12J).